A 177-amino-acid polypeptide reads, in one-letter code: NADH-quinone oxidoreductase subunit B (177 aa).

[4Fe-4S] cluster-binding residues include Cys-56, Cys-57, Cys-121, and Cys-151.

Belongs to the complex I 20 kDa subunit family. As to quaternary structure, NDH-1 is composed of 14 different subunits. Subunits NuoB, C, D, E, F, and G constitute the peripheral sector of the complex. Requires [4Fe-4S] cluster as cofactor.

The protein resides in the cell inner membrane. It carries out the reaction a quinone + NADH + 5 H(+)(in) = a quinol + NAD(+) + 4 H(+)(out). NDH-1 shuttles electrons from NADH, via FMN and iron-sulfur (Fe-S) centers, to quinones in the respiratory chain. The immediate electron acceptor for the enzyme in this species is believed to be ubiquinone. Couples the redox reaction to proton translocation (for every two electrons transferred, four hydrogen ions are translocated across the cytoplasmic membrane), and thus conserves the redox energy in a proton gradient. The sequence is that of NADH-quinone oxidoreductase subunit B from Rhodobacter capsulatus (Rhodopseudomonas capsulata).